Reading from the N-terminus, the 331-residue chain is Biotin synthase (331 aa).

Residues 39–264 form the Radical SAM core domain; it reads SELQTCYLIS…VFPRSMVRLA (226 aa). Residues Cys54, Cys58, and Cys61 each contribute to the [4Fe-4S] cluster site. [2Fe-2S] cluster contacts are provided by Cys98, Cys130, Cys190, and Arg262.

It belongs to the radical SAM superfamily. Biotin synthase family. In terms of assembly, homodimer. The cofactor is [4Fe-4S] cluster. Requires [2Fe-2S] cluster as cofactor.

The enzyme catalyses (4R,5S)-dethiobiotin + (sulfur carrier)-SH + 2 reduced [2Fe-2S]-[ferredoxin] + 2 S-adenosyl-L-methionine = (sulfur carrier)-H + biotin + 2 5'-deoxyadenosine + 2 L-methionine + 2 oxidized [2Fe-2S]-[ferredoxin]. The protein operates within cofactor biosynthesis; biotin biosynthesis; biotin from 7,8-diaminononanoate: step 2/2. Functionally, catalyzes the conversion of dethiobiotin (DTB) to biotin by the insertion of a sulfur atom into dethiobiotin via a radical-based mechanism. The chain is Biotin synthase from Chlamydia pneumoniae (Chlamydophila pneumoniae).